A 455-amino-acid chain; its full sequence is GTPase Der (455 aa).

EngA-type G domains follow at residues P4–D169 and I178–R353. Residues G10–S17, D57–L61, N120–E123, G184–S191, D231–I235, and N296–D299 each bind GTP. One can recognise a KH-like domain in the interval R354 to Q439.

This sequence belongs to the TRAFAC class TrmE-Era-EngA-EngB-Septin-like GTPase superfamily. EngA (Der) GTPase family. In terms of assembly, associates with the 50S ribosomal subunit.

In terms of biological role, GTPase that plays an essential role in the late steps of ribosome biogenesis. This Synechococcus sp. (strain CC9605) protein is GTPase Der.